A 140-amino-acid chain; its full sequence is uncharacterized protein (140 aa).

Asparagine 86 carries N-linked (GlcNAc...) asparagine; by host glycosylation. The helical transmembrane segment at 92 to 112 (IFNGLGFILIVIFIYLLLITL) threads the bilayer.

Belongs to the asfivirus B117L family.

The protein localises to the host membrane. It is found in the virion. This is an uncharacterized protein from African swine fever virus (isolate Pig/Kenya/KEN-50/1950) (ASFV).